Consider the following 132-residue polypeptide: Fatty acid-binding protein type 3 (132 aa).

Belongs to the calycin superfamily. Fatty-acid binding protein (FABP) family.

This chain is Fatty acid-binding protein type 3, found in Fasciola hepatica (Liver fluke).